The chain runs to 415 residues: Neuromedin-U receptor 2 (415 aa).

The Extracellular portion of the chain corresponds to 1–49 (MSGMEKLQNASWIYQQKLEDPFQKHLNSTEEYLAFLCGPRRSHFFLPVS). Residues asparagine 9 and asparagine 27 are each glycosylated (N-linked (GlcNAc...) asparagine). The chain crosses the membrane as a helical span at residues 50 to 70 (VVYVPIFVVGVIGNVLVCLVI). At 71-82 (LQHQAMKTPTNY) the chain is on the cytoplasmic side. The helical transmembrane segment at 83–103 (YLFSLAVSDLLVLLLGMPLEV) threads the bilayer. The Extracellular segment spans residues 104–123 (YEMWRNYPFLFGPVGCYFKT). Cysteines 119 and 204 form a disulfide. The helical transmembrane segment at 124-146 (ALFETVCFASILSITTVSVERYV) threads the bilayer. Residues 147-165 (AILHPFRAKLQSTRRRALR) are Cytoplasmic-facing. The chain crosses the membrane as a helical span at residues 166–186 (ILGIVWGFSVLFSLPNTSIHG). Residues 187 to 214 (IKFHYFPNGSLVPGSATCTVIKPMWIYN) are Extracellular-facing. Residue asparagine 194 is glycosylated (N-linked (GlcNAc...) asparagine). Residues 215-235 (FIIQVTSFLFYLLPMTVISVL) form a helical membrane-spanning segment. The Cytoplasmic portion of the chain corresponds to 236–265 (YYLMALRLKKDKSLEADEGNANIQRPCRKS). The helical transmembrane segment at 266–286 (VNKMLFVLVLVFAICWAPFHI) threads the bilayer. The Extracellular segment spans residues 287–301 (DRLFFSFVEEWSESL). The helical transmembrane segment at 302–322 (AAVFNLVHVVSGVFFYLSSAV) threads the bilayer. The Cytoplasmic portion of the chain corresponds to 323–415 (NPIIYNLLSR…NYQSFHFNKT (93 aa)).

Belongs to the G-protein coupled receptor 1 family. In terms of tissue distribution, predominantly expressed in the CNS, particularly in the medulla oblongata, pontine reticular formation, spinal cord, and thalamus. High level in testis whereas lower levels are present in a variety of peripheral tissues including the gastrointestinal tract, genitourinary tract, liver, pancreas, adrenal gland, thyroid gland, lung, trachea, spleen and thymus.

The protein resides in the cell membrane. Functionally, receptor for the neuromedin-U and neuromedin-S neuropeptides. The chain is Neuromedin-U receptor 2 (NMUR2) from Homo sapiens (Human).